Consider the following 352-residue polypeptide: Ion-translocating oxidoreductase complex subunit D (352 aa).

4 helical membrane-spanning segments follow: residues 20 to 40, 42 to 62, 89 to 109, and 123 to 143; these read IMLLVLLAAVPGIAAQLWFFG, GTLVQILLASVSALLAEALVL, IPPLAPWWMVVLGTVFAAIIA, and PAMIGYVVLLISFPVQMTSWL. Residue threonine 187 is modified to FMN phosphoryl threonine. 5 helical membrane-spanning segments follow: residues 214 to 234, 242 to 262, 267 to 287, 301 to 321, and 322 to 342; these read ILAGAGWQWVNLAWLAGGLWL, WHIPLSFLVTLALCATLGWLF, LAAPQIHLLSGATMLGAFFIL, LIFGALAGLLVWLIRSFGGYP, and DGVAFAVLLANITVPLIDYYT.

The protein belongs to the NqrB/RnfD family. As to quaternary structure, the complex is composed of six subunits: RsxA, RsxB, RsxC, RsxD, RsxE and RsxG. Requires FMN as cofactor.

The protein localises to the cell inner membrane. Functionally, part of a membrane-bound complex that couples electron transfer with translocation of ions across the membrane. Required to maintain the reduced state of SoxR. The protein is Ion-translocating oxidoreductase complex subunit D of Escherichia coli (strain ATCC 8739 / DSM 1576 / NBRC 3972 / NCIMB 8545 / WDCM 00012 / Crooks).